Here is a 251-residue protein sequence, read N- to C-terminus: Ditrans,polycis-undecaprenyl-diphosphate synthase ((2E,6E)-farnesyl-diphosphate specific) (251 aa).

D26 is a catalytic residue. D26 contacts Mg(2+). Residues 27 to 30, W31, R39, H43, and 71 to 73 contribute to the substrate site; these read GNGR and SSE. Residue N74 is the Proton acceptor of the active site. Residues W75, R77, R194, and 200–202 each bind substrate; that span reads RIS. Residue E213 participates in Mg(2+) binding.

This sequence belongs to the UPP synthase family. In terms of assembly, homodimer. Mg(2+) serves as cofactor.

The enzyme catalyses 8 isopentenyl diphosphate + (2E,6E)-farnesyl diphosphate = di-trans,octa-cis-undecaprenyl diphosphate + 8 diphosphate. Its function is as follows. Catalyzes the sequential condensation of isopentenyl diphosphate (IPP) with (2E,6E)-farnesyl diphosphate (E,E-FPP) to yield (2Z,6Z,10Z,14Z,18Z,22Z,26Z,30Z,34E,38E)-undecaprenyl diphosphate (di-trans,octa-cis-UPP). UPP is the precursor of glycosyl carrier lipid in the biosynthesis of bacterial cell wall polysaccharide components such as peptidoglycan and lipopolysaccharide. The chain is Ditrans,polycis-undecaprenyl-diphosphate synthase ((2E,6E)-farnesyl-diphosphate specific) from Buchnera aphidicola subsp. Acyrthosiphon pisum (strain APS) (Acyrthosiphon pisum symbiotic bacterium).